Reading from the N-terminus, the 119-residue chain is Small ribosomal subunit protein uS13 (119 aa).

The interval 96-119 (PVRGQRTKTNARTRKGPRKLIKSR) is disordered.

The protein belongs to the universal ribosomal protein uS13 family. As to quaternary structure, part of the 30S ribosomal subunit. Forms a loose heterodimer with protein S19. Forms two bridges to the 50S subunit in the 70S ribosome.

Located at the top of the head of the 30S subunit, it contacts several helices of the 16S rRNA. In the 70S ribosome it contacts the 23S rRNA (bridge B1a) and protein L5 of the 50S subunit (bridge B1b), connecting the 2 subunits; these bridges are implicated in subunit movement. Contacts the tRNAs in the A and P-sites. The protein is Small ribosomal subunit protein uS13 of Buchnera aphidicola subsp. Cinara cedri (strain Cc).